We begin with the raw amino-acid sequence, 132 residues long: Small ribosomal subunit protein uS11 (132 aa).

This sequence belongs to the universal ribosomal protein uS11 family. Part of the 30S ribosomal subunit. Interacts with proteins S7 and S18. Binds to IF-3.

Located on the platform of the 30S subunit, it bridges several disparate RNA helices of the 16S rRNA. Forms part of the Shine-Dalgarno cleft in the 70S ribosome. In Chlamydia muridarum (strain MoPn / Nigg), this protein is Small ribosomal subunit protein uS11.